The chain runs to 364 residues: Peroxidase (364 aa).

The signal sequence occupies residues 1-20 (MKLSLFSTFAAVIIGALALP). Gln-21 is modified (pyrrolidone carboxylic acid). 4 disulfides stabilise this stretch: Cys-32–Cys-44, Cys-43–Cys-313, Cys-63–Cys-149, and Cys-277–Cys-342. Catalysis depends on His-76, which acts as the Proton acceptor. The Ca(2+) site is built by Asp-77, Gly-95, Asp-97, and Ser-99. Asn-163 carries N-linked (GlcNAc...) (high mannose) asparagine glycosylation. His-204 is a binding site for heme b. The Ca(2+) site is built by Ser-205, Asp-222, Thr-224, Val-227, and Asp-229.

Belongs to the peroxidase family. Ligninase subfamily. The cofactor is Ca(2+). Heme b is required as a cofactor.

The protein localises to the secreted. It carries out the reaction 2 a phenolic donor + H2O2 = 2 a phenolic radical donor + 2 H2O. This is Peroxidase from Arthromyces ramosus.